The chain runs to 157 residues: ATP synthase subunit b' (157 aa).

A helical membrane pass occupies residues 22 to 42 (ATLPLIAIQFLLLVAVLNSLF).

The protein belongs to the ATPase B chain family. F-type ATPases have 2 components, F(1) - the catalytic core - and F(0) - the membrane proton channel. F(1) has five subunits: alpha(3), beta(3), gamma(1), delta(1), epsilon(1). F(0) has four main subunits: a(1), b(1), b'(1) and c(10-14). The alpha and beta chains form an alternating ring which encloses part of the gamma chain. F(1) is attached to F(0) by a central stalk formed by the gamma and epsilon chains, while a peripheral stalk is formed by the delta, b and b' chains.

Its subcellular location is the cellular thylakoid membrane. Its function is as follows. F(1)F(0) ATP synthase produces ATP from ADP in the presence of a proton or sodium gradient. F-type ATPases consist of two structural domains, F(1) containing the extramembraneous catalytic core and F(0) containing the membrane proton channel, linked together by a central stalk and a peripheral stalk. During catalysis, ATP synthesis in the catalytic domain of F(1) is coupled via a rotary mechanism of the central stalk subunits to proton translocation. Functionally, component of the F(0) channel, it forms part of the peripheral stalk, linking F(1) to F(0). The b'-subunit is a diverged and duplicated form of b found in plants and photosynthetic bacteria. The chain is ATP synthase subunit b' from Synechococcus sp. (strain JA-2-3B'a(2-13)) (Cyanobacteria bacterium Yellowstone B-Prime).